The chain runs to 492 residues: N-succinylglutamate 5-semialdehyde dehydrogenase (492 aa).

220–225 (GSANTG) contacts NAD(+). Residues E243 and C277 contribute to the active site.

It belongs to the aldehyde dehydrogenase family. AstD subfamily.

The catalysed reaction is N-succinyl-L-glutamate 5-semialdehyde + NAD(+) + H2O = N-succinyl-L-glutamate + NADH + 2 H(+). It participates in amino-acid degradation; L-arginine degradation via AST pathway; L-glutamate and succinate from L-arginine: step 4/5. Functionally, catalyzes the NAD-dependent reduction of succinylglutamate semialdehyde into succinylglutamate. This is N-succinylglutamate 5-semialdehyde dehydrogenase from Escherichia coli O139:H28 (strain E24377A / ETEC).